A 396-amino-acid polypeptide reads, in one-letter code: MSKYKRIFTIVIDSLGIGAMNDSEKYGDVNVDTLGHIAESVDTFNIPNLQKMGIANLHPIKHVAPVENPIGYQAKMAEASVGKDTMTGHWEMMGLHITKPFKTFTDTGFPQELLDELTERTGHKIVGNKSASGTEILDELGEHQIATGDMIVYTSADSVLQICGQEETFGLEELYRCCEIARELTLKDEWKVGRIIARPYLGTKKGEFKRTSNRHDYALKPYGRTVLNELKDNNFDVISVGKIKDIFDGEGITEGNKSKSSVHGMEQTLEIMDRDFTGFCFVNLVDFDALWGHRRNPQGYAEELEKFDVNLGKVLEKLHEDDLLIITADHGNDPTYTGTDHTREYVPFLAYSPSMKGHGQLETPKTFATIGATIADNFGLKMPEGTIGESVLNKLV.

The Mn(2+) site is built by D13, D288, H293, D329, H330, and H341.

It belongs to the phosphopentomutase family. The cofactor is Mn(2+).

Its subcellular location is the cytoplasm. It catalyses the reaction 2-deoxy-alpha-D-ribose 1-phosphate = 2-deoxy-D-ribose 5-phosphate. It carries out the reaction alpha-D-ribose 1-phosphate = D-ribose 5-phosphate. The protein operates within carbohydrate degradation; 2-deoxy-D-ribose 1-phosphate degradation; D-glyceraldehyde 3-phosphate and acetaldehyde from 2-deoxy-alpha-D-ribose 1-phosphate: step 1/2. In terms of biological role, isomerase that catalyzes the conversion of deoxy-ribose 1-phosphate (dRib-1-P) and ribose 1-phosphate (Rib-1-P) to deoxy-ribose 5-phosphate (dRib-5-P) and ribose 5-phosphate (Rib-5-P), respectively. In Clostridium perfringens (strain 13 / Type A), this protein is Phosphopentomutase.